We begin with the raw amino-acid sequence, 1512 residues long: Sterol 3-beta-glucosyltransferase (1512 aa).

2 disordered regions span residues 22-50 (FSGS…YHSL) and 150-222 (DEHT…DTDV). Residues 156–169 (SEEEDSADKEEESI) show a composition bias toward acidic residues. Positions 190 to 222 (TTATLITTQITRTKTATTATPTPTPTSSVDTDV) are enriched in low complexity. The GRAM 1 domain maps to 296–331 (LQRVFDLSDEDTFCGNYSAWLIKDVLLQGHVYLTKD). In terms of domain architecture, PH spans 359 to 520 (SIVYSGNLGL…WCNNITKLIF (162 aa)). Positions 816–880 (RNFQSHFSTN…TDIEEVRASR (65 aa)) constitute a GRAM 2 domain. Residues serine 1024, arginine 1025, aspartate 1027, asparagine 1299, isoleucine 1328, histidine 1330, histidine 1343, serine 1346, glycine 1347, threonine 1348, aspartate 1367, and glutamine 1368 each contribute to the UDP-alpha-D-glucose site. A disordered region spans residues 1450–1512 (YKRHHPVPSG…NNSPSQNSSN (63 aa)). Acidic residues predominate over residues 1467–1493 (TDSDDYDDDEDDDESDKDDEEEEEENS). A compositionally biased stretch (polar residues) spans 1501 to 1512 (GVNNSPSQNSSN).

The protein belongs to the glycosyltransferase 28 family.

The protein resides in the cytoplasm. The protein localises to the membrane. It catalyses the reaction a sterol + UDP-alpha-D-glucose = a sterol 3-beta-D-glucoside + UDP + H(+). The catalysed reaction is ergosterol + UDP-alpha-D-glucose = ergosteryl 3-beta-D-glucoside + UDP + H(+). Its function is as follows. Sterol glycosyltransferase responsible for the glycosylation of ergosterol to form ergosterol-glucoside. This is Sterol 3-beta-glucosyltransferase from Candida albicans (strain SC5314 / ATCC MYA-2876) (Yeast).